The following is a 74-amino-acid chain: MADALKKGSLIRVNREAYLSSVEAKASAGDPPAYLLEGPGEVLAVKGDYAQLRFRQPVPDIWLRMDQLEAYAGS.

Belongs to the complex I NdhO subunit family. As to quaternary structure, NDH-1 can be composed of about 15 different subunits; different subcomplexes with different compositions have been identified which probably have different functions.

Its subcellular location is the cellular thylakoid membrane. It carries out the reaction a plastoquinone + NADH + (n+1) H(+)(in) = a plastoquinol + NAD(+) + n H(+)(out). The catalysed reaction is a plastoquinone + NADPH + (n+1) H(+)(in) = a plastoquinol + NADP(+) + n H(+)(out). In terms of biological role, NDH-1 shuttles electrons from an unknown electron donor, via FMN and iron-sulfur (Fe-S) centers, to quinones in the respiratory and/or the photosynthetic chain. The immediate electron acceptor for the enzyme in this species is believed to be plastoquinone. Couples the redox reaction to proton translocation, and thus conserves the redox energy in a proton gradient. Cyanobacterial NDH-1 also plays a role in inorganic carbon-concentration. The sequence is that of NAD(P)H-quinone oxidoreductase subunit O from Synechococcus sp. (strain RCC307).